We begin with the raw amino-acid sequence, 156 residues long: Rhombotin-1 (156 aa).

LIM zinc-binding domains follow at residues K22–T84 and G86–N148.

In terms of tissue distribution, expressed in the brain and not in the thymus.

Its subcellular location is the nucleus. May be involved in gene regulation within neural lineage cells potentially by direct DNA binding or by binding to other transcription factors. The polypeptide is Rhombotin-1 (LMO1) (Bos taurus (Bovine)).